Reading from the N-terminus, the 222-residue chain is V-type ATP synthase subunit D (222 aa).

This sequence belongs to the V-ATPase D subunit family.

Functionally, produces ATP from ADP in the presence of a proton gradient across the membrane. This chain is V-type ATP synthase subunit D, found in Clostridioides difficile (strain 630) (Peptoclostridium difficile).